We begin with the raw amino-acid sequence, 309 residues long: DNA replication terminus site-binding protein (309 aa).

This sequence belongs to the Tus family.

The protein localises to the cytoplasm. Its function is as follows. Trans-acting protein required for termination of DNA replication. Binds to DNA replication terminator sequences (terA to terF) to prevent the passage of replication forks. The termination efficiency will be affected by the affinity of this protein for the terminator sequence. This Yersinia enterocolitica serotype O:8 / biotype 1B (strain NCTC 13174 / 8081) protein is DNA replication terminus site-binding protein.